The primary structure comprises 232 residues: 2,3,4,5-tetrahydropyridine-2,6-dicarboxylate N-acetyltransferase (232 aa).

This sequence belongs to the transferase hexapeptide repeat family. DapH subfamily.

The enzyme catalyses (S)-2,3,4,5-tetrahydrodipicolinate + acetyl-CoA + H2O = L-2-acetamido-6-oxoheptanedioate + CoA. It functions in the pathway amino-acid biosynthesis; L-lysine biosynthesis via DAP pathway; LL-2,6-diaminopimelate from (S)-tetrahydrodipicolinate (acetylase route): step 1/3. In terms of biological role, catalyzes the transfer of an acetyl group from acetyl-CoA to tetrahydrodipicolinate. The sequence is that of 2,3,4,5-tetrahydropyridine-2,6-dicarboxylate N-acetyltransferase from Streptococcus gordonii (strain Challis / ATCC 35105 / BCRC 15272 / CH1 / DL1 / V288).